The primary structure comprises 1456 residues: DNA polymerase gamma, mitochondrial (1456 aa).

The transit peptide at 1–41 directs the protein to the mitochondrion; the sequence is MLTPVRCRTVPNATVATAARVLRRANLFSRYPRQLGHLRWD. Disordered stretches follow at residues 1200-1266 and 1308-1443; these read APEM…SLDD and AVTT…SWKP. Residues 1204-1239 are compositionally biased toward low complexity; sequence AAVPSTSSESKSKASATTSTTTTENATASPSSSSNV. The span at 1315-1325 shows a compositional bias: pro residues; that stretch reads PEPPTNPPPVA. Composition is skewed to low complexity over residues 1346–1371 and 1411–1428; these read PKNP…TPKP and TASV…ATAT.

This sequence belongs to the DNA polymerase type-A family. Mg(2+) serves as cofactor.

The protein resides in the mitochondrion. It carries out the reaction DNA(n) + a 2'-deoxyribonucleoside 5'-triphosphate = DNA(n+1) + diphosphate. Functionally, involved in the replication of mitochondrial DNA. The polypeptide is DNA polymerase gamma, mitochondrial (mip-1) (Neurospora crassa (strain ATCC 24698 / 74-OR23-1A / CBS 708.71 / DSM 1257 / FGSC 987)).